The primary structure comprises 355 residues: Elongation factor Ts (355 aa).

Residues 82–85 form an involved in Mg(2+) ion dislocation from EF-Tu region; the sequence is TDFV.

It belongs to the EF-Ts family.

It is found in the cytoplasm. In terms of biological role, associates with the EF-Tu.GDP complex and induces the exchange of GDP to GTP. It remains bound to the aminoacyl-tRNA.EF-Tu.GTP complex up to the GTP hydrolysis stage on the ribosome. The sequence is that of Elongation factor Ts from Helicobacter hepaticus (strain ATCC 51449 / 3B1).